A 119-amino-acid chain; its full sequence is Ribonuclease (119 aa).

Substrate-binding residues include Lys-6 and Arg-9. His-11 acts as the Proton acceptor in catalysis. 3 cysteine pairs are disulfide-bonded: Cys-26-Cys-81, Cys-40-Cys-92, and Cys-58-Cys-107. Substrate is bound by residues 41 to 45 (KFTNT) and Arg-82. The Proton donor role is filled by His-114.

It belongs to the pancreatic ribonuclease family. In terms of assembly, monomer. Interacts with and forms tight 1:1 complexes with RNH1. Dimerization of two such complexes may occur. Interaction with RNH1 inhibits this protein. As to expression, pancreas.

The protein localises to the secreted. The enzyme catalyses an [RNA] containing cytidine + H2O = an [RNA]-3'-cytidine-3'-phosphate + a 5'-hydroxy-ribonucleotide-3'-[RNA].. It catalyses the reaction an [RNA] containing uridine + H2O = an [RNA]-3'-uridine-3'-phosphate + a 5'-hydroxy-ribonucleotide-3'-[RNA].. Functionally, endonuclease that catalyzes the cleavage of RNA on the 3' side of pyrimidine nucleotides. Acts on single-stranded and double-stranded RNA. In Chelydra serpentina (Snapping turtle), this protein is Ribonuclease.